The following is a 423-amino-acid chain: Imidazolonepropionase (423 aa).

Fe(3+) is bound by residues H87 and H89. Zn(2+) is bound by residues H87 and H89. 4-imidazolone-5-propanoate is bound by residues R96, Y159, and H192. Y159 contacts N-formimidoyl-L-glutamate. H257 is a Fe(3+) binding site. Position 257 (H257) interacts with Zn(2+). E260 provides a ligand contact to 4-imidazolone-5-propanoate. Residue D331 participates in Fe(3+) binding. Position 331 (D331) interacts with Zn(2+). N333 and G335 together coordinate N-formimidoyl-L-glutamate. S336 is a 4-imidazolone-5-propanoate binding site.

It belongs to the metallo-dependent hydrolases superfamily. HutI family. Zn(2+) serves as cofactor. Requires Fe(3+) as cofactor.

It is found in the cytoplasm. It carries out the reaction 4-imidazolone-5-propanoate + H2O = N-formimidoyl-L-glutamate. Its pathway is amino-acid degradation; L-histidine degradation into L-glutamate; N-formimidoyl-L-glutamate from L-histidine: step 3/3. Its function is as follows. Catalyzes the hydrolytic cleavage of the carbon-nitrogen bond in imidazolone-5-propanoate to yield N-formimidoyl-L-glutamate. It is the third step in the universal histidine degradation pathway. The polypeptide is Imidazolonepropionase (Porphyromonas gingivalis (strain ATCC 33277 / DSM 20709 / CIP 103683 / JCM 12257 / NCTC 11834 / 2561)).